We begin with the raw amino-acid sequence, 568 residues long: Protein phosphatase 1 regulatory inhibitor subunit 16B (568 aa).

Residues 15–55 adopt a coiled-coil conformation; it reads EKVPTLERLRAAQKRRAQQLKKWAQYEQDLQHRKRKHERKR. Residue S69 is modified to Phosphoserine. ANK repeat units follow at residues 100-129, 133-162, 228-257, and 261-290; these read DGLTALHQCCIDNFEEIVKLLLSHGANVNA, ELWTPLHAAATCGHINLVKILVQYGADLLA, QGATLLHIAGANGYLRAAELLLDHGVRVDV, and DGWEPLHAAAFWGQMQMAELLVSHGASLSA. The disordered stretch occupies residues 327–346; it reads RHKSSLSRRTSSAGSRGKVV. Residues S333, S337, and S350 each carry the phosphoserine modification. Residues 333–342 show a composition bias toward low complexity; sequence SRRTSSAGSR. Positions 373 to 404 are disordered; it reads SASEDQRNSTYNGDIRETRTDQENKDPNPRLE. Residues 386 to 404 show a composition bias toward basic and acidic residues; that stretch reads DIRETRTDQENKDPNPRLE. S477 is subject to Phosphoserine. Residues 504–525 form a disordered region; that stretch reads GSGVSRTGEGSSEGKAPLIGGR. The stretch at 531–560 is one ANK 5 repeat; the sequence is SNGTSVYYTVTSGDPPLLKFKAPIEEMEEK. C564 carries S-palmitoyl cysteine lipidation. At C565 the chain carries Cysteine methyl ester. C565 carries the S-farnesyl cysteine lipid modification. The propeptide at 566–568 is removed in mature form; the sequence is RIS.

As to quaternary structure, interacts with PPP1CA, PPP1CB and MSN. Interacts (via its fourth ankyrin repeat) with the mature dimeric form of RPSA/LAMR1. Interacts with EEF1A1. Interacts with PTEN. Interacts with ECE1. Post-translationally, phosphorylated by PKA and, after PKA priming, by GSK3B. Phosphorylation by GSK3B reduces its association with PP1C and enhances PP1C activity. Dephosphorylation by its associated PP1C results in enhanced association with PP1C, but reduced PP1C activity.

Its subcellular location is the cell membrane. It is found in the nucleus. The protein resides in the cell projection. Its function is as follows. Regulator of protein phosphatase 1 (PP1) that acts as a positive regulator of pulmonary endothelial cell (EC) barrier function. Protects the endothelial barrier from lipopolysaccharide (LPS)-induced vascular leakage. Involved in the regulation of the PI3K/AKT signaling pathway. Involved in the regulation of angiogenesis and endothelial cell proliferation through the control of ECE1 dephosphorylation, trafficking and activity. Involved in the regulation of endothelial cell filopodia extension. May be a downstream target for TGF-beta1 signaling cascade in endothelial cells. Involved in PKA-mediated moesin dephosphorylation which is important in EC barrier protection against thrombin stimulation. Promotes the interaction of PPP1CA with RPSA/LAMR1 and in turn facilitates the dephosphorylation of RPSA/LAMR1. Involved in the dephosphorylation of EEF1A1. The protein is Protein phosphatase 1 regulatory inhibitor subunit 16B (PPP1R16B) of Bos taurus (Bovine).